The sequence spans 159 residues: 6,7-dimethyl-8-ribityllumazine synthase (159 aa).

5-amino-6-(D-ribitylamino)uracil contacts are provided by residues W28, 59–61 (ALE), and 81–83 (CVI). Residue 86 to 87 (GT) coordinates (2S)-2-hydroxy-3-oxobutyl phosphate. Residue H89 is the Proton donor of the active site. Residue N114 participates in 5-amino-6-(D-ribitylamino)uracil binding. R128 contacts (2S)-2-hydroxy-3-oxobutyl phosphate.

The protein belongs to the DMRL synthase family.

The catalysed reaction is (2S)-2-hydroxy-3-oxobutyl phosphate + 5-amino-6-(D-ribitylamino)uracil = 6,7-dimethyl-8-(1-D-ribityl)lumazine + phosphate + 2 H2O + H(+). Its pathway is cofactor biosynthesis; riboflavin biosynthesis; riboflavin from 2-hydroxy-3-oxobutyl phosphate and 5-amino-6-(D-ribitylamino)uracil: step 1/2. Functionally, catalyzes the formation of 6,7-dimethyl-8-ribityllumazine by condensation of 5-amino-6-(D-ribitylamino)uracil with 3,4-dihydroxy-2-butanone 4-phosphate. This is the penultimate step in the biosynthesis of riboflavin. This chain is 6,7-dimethyl-8-ribityllumazine synthase, found in Corynebacterium kroppenstedtii (strain DSM 44385 / JCM 11950 / CIP 105744 / CCUG 35717).